The following is a 524-amino-acid chain: Coatomer subunit delta-1 (524 aa).

The tract at residues 215-244 (MDMDSFASKPKGGRPSAAATAPGKGLGMKL) is disordered. Residues 283–524 (SDPVTVTIEE…RLVAANYQVV (242 aa)) enclose the MHD domain.

The protein belongs to the adaptor complexes medium subunit family. Delta-COP subfamily. In terms of assembly, oligomeric complex that consists of at least the alpha, beta, beta', gamma, delta, epsilon and zeta subunits.

Its subcellular location is the cytoplasm. It localises to the golgi apparatus membrane. It is found in the cytoplasmic vesicle. The protein resides in the COPI-coated vesicle membrane. The coatomer is a cytosolic protein complex that binds to dilysine motifs and reversibly associates with Golgi non-clathrin-coated vesicles, which further mediate biosynthetic protein transport from the ER, via the Golgi up to the trans Golgi network. Coatomer complex is required for budding from Golgi membranes, and is essential for the retrograde Golgi-to-ER transport of dilysine-tagged proteins. The sequence is that of Coatomer subunit delta-1 from Oryza sativa subsp. japonica (Rice).